A 1102-amino-acid chain; its full sequence is Phosphatidylinositol 4,5-bisphosphate 3-kinase catalytic subunit gamma isoform (1102 aa).

In terms of domain architecture, PI3K-ABD spans 34–141; that stretch reads SMELIPIEFV…PGQIHLVQRH (108 aa). A PI3K-RBD domain is found at 217 to 309; sequence NNCIFIVIHR…GEEIHVVLDT (93 aa). A C2 PI3K-type domain is found at 357 to 521; sequence CDRKFRVKIR…NSMSISILLD (165 aa). The 183-residue stretch at 541–723 folds into the PIK helical domain; it reads DRVRAEMPNQ…AVILEAYLRG (183 aa). One can recognise a PI3K/PI4K catalytic domain in the interval 797-1080; sequence AIEKCKVMAS…QIEVCRDKGW (284 aa). The interval 803–809 is G-loop; it reads VMASKKK. ATP is bound by residues 829–838 and 864–872; these read GIIFKHGDDL and LLPYGCIST. Positions 943–951 are catalytic loop; sequence GIGDRHNDN. Residue 961–969 participates in ATP binding; it reads FHIDFGHIL. The activation loop stretch occupies residues 962–988; that stretch reads HIDFGHILGNYKSFLGINKERVPFVLT. Phosphothreonine; by PKA is present on Thr-1024. Ser-1101 bears the Phosphoserine; by autocatalysis mark.

Belongs to the PI3/PI4-kinase family. In terms of assembly, heterodimer of a catalytic subunit PIK3CG and a PIK3R5 or PIK3R6 regulatory subunit. Interacts with GRK2 through the PIK helical domain. Interaction with GRK2 is required for targeting to agonist-occupied receptor. Interacts with PDE3B; regulates PDE3B activity and thereby cAMP levels in cells. Interacts with TPM2. Interacts with EPHA8; regulates integrin-mediated cell adhesion to substrate. Interacts with HRAS; the interaction is required for membrane recruitment and beta-gamma G protein dimer-dependent activation of the PI3K gamma complex PIK3CG:PIK3R6. Autophosphorylation at Ser-1101 has no effect on the phosphatidylinositol-4,5-bisphosphate 3-kinase activity. In terms of tissue distribution, pancreas, skeletal muscle, liver and heart.

It localises to the cytoplasm. Its subcellular location is the cell membrane. It catalyses the reaction a 1,2-diacyl-sn-glycero-3-phospho-(1D-myo-inositol) + ATP = a 1,2-diacyl-sn-glycero-3-phospho-(1D-myo-inositol-3-phosphate) + ADP + H(+). The catalysed reaction is a 1,2-diacyl-sn-glycero-3-phospho-(1D-myo-inositol-4,5-bisphosphate) + ATP = a 1,2-diacyl-sn-glycero-3-phospho-(1D-myo-inositol-3,4,5-trisphosphate) + ADP + H(+). It carries out the reaction a 1,2-diacyl-sn-glycero-3-phospho-(1D-myo-inositol 4-phosphate) + ATP = a 1,2-diacyl-sn-glycero-3-phospho-(1D-myo-inositol-3,4-bisphosphate) + ADP + H(+). The enzyme catalyses L-seryl-[protein] + ATP = O-phospho-L-seryl-[protein] + ADP + H(+). It functions in the pathway phospholipid metabolism; phosphatidylinositol phosphate biosynthesis. Activated by both the alpha and the beta-gamma G proteins following stimulation of G protein-coupled receptors (GPCRs). Activation by GPCRs is assisted by the regulatory subunits (PIK3R5 or PIK3R6) leading to the translocation from the cytosol to the plasma membrane and to kinase activation. Inhibited by AS-604850 and AS-605240. Phosphoinositide-3-kinase (PI3K) that phosphorylates PtdIns(4,5)P2 (Phosphatidylinositol 4,5-bisphosphate) to generate phosphatidylinositol 3,4,5-trisphosphate (PIP3). PIP3 plays a key role by recruiting PH domain-containing proteins to the membrane, including AKT1 and PDPK1, activating signaling cascades involved in cell growth, survival, proliferation, motility and morphology. Links G-protein coupled receptor activation to PIP3 production. Involved in immune, inflammatory and allergic responses. Modulates leukocyte chemotaxis to inflammatory sites and in response to chemoattractant agents. May control leukocyte polarization and migration by regulating the spatial accumulation of PIP3 and by regulating the organization of F-actin formation and integrin-based adhesion at the leading edge. Controls motility of dendritic cells. Together with PIK3CD is involved in natural killer (NK) cell development and migration towards the sites of inflammation. Participates in T-lymphocyte migration. Regulates T-lymphocyte proliferation, activation, and cytokine production. Together with PIK3CD participates in T-lymphocyte development. Required for B-lymphocyte development and signaling. Together with PIK3CD participates in neutrophil respiratory burst. Together with PIK3CD is involved in neutrophil chemotaxis and extravasation. Together with PIK3CB promotes platelet aggregation and thrombosis. Regulates alpha-IIb/beta-3 integrins (ITGA2B/ ITGB3) adhesive function in platelets downstream of P2Y12 through a lipid kinase activity-independent mechanism. May have also a lipid kinase activity-dependent function in platelet aggregation. Involved in endothelial progenitor cell migration. Negative regulator of cardiac contractility. Modulates cardiac contractility by anchoring protein kinase A (PKA) and PDE3B activation, reducing cAMP levels. Regulates cardiac contractility also by promoting beta-adrenergic receptor internalization by binding to GRK2 and by non-muscle tropomyosin phosphorylation. Also has serine/threonine protein kinase activity: both lipid and protein kinase activities are required for beta-adrenergic receptor endocytosis. May also have a scaffolding role in modulating cardiac contractility. Contributes to cardiac hypertrophy under pathological stress. Through simultaneous binding of PDE3B to RAPGEF3 and PIK3R6 is assembled in a signaling complex in which the PI3K gamma complex is activated by RAPGEF3 and which is involved in angiogenesis. In neutrophils, participates in a phospholipase C-activating N-formyl peptide-activated GPCR (G protein-coupled receptor) signaling pathway downstream of RASGRP4-mediated Ras-activation, to promote neutrophil functional responses. The sequence is that of Phosphatidylinositol 4,5-bisphosphate 3-kinase catalytic subunit gamma isoform (PIK3CG) from Homo sapiens (Human).